The following is a 246-amino-acid chain: 2-deoxyglucose-6-phosphate phosphatase 1 (246 aa).

The active-site Nucleophile is aspartate 83. A Mg(2+)-binding site is contributed by aspartate 83. Residues aspartate 83, glutamate 92, and 146–149 (DVKN) contribute to the substrate site. Mg(2+) is bound at residue aspartate 183.

This sequence belongs to the HAD-like hydrolase superfamily. DOG/GPP family. Requires Mg(2+) as cofactor.

It carries out the reaction 2-deoxy-D-glucose 6-phosphate + H2O = 2-deoxy-D-glucose + phosphate. In terms of biological role, phosphatase that is active on 2-deoxy-D-glucose 6-phosphate (2-DOG-6P), as well as on fructose-1-P. The polypeptide is 2-deoxyglucose-6-phosphate phosphatase 1 (Saccharomyces cerevisiae (strain ATCC 204508 / S288c) (Baker's yeast)).